The chain runs to 220 residues: Nicotinamidase (220 aa).

Asp-11 is an active-site residue. Residues Asp-53, His-55, and His-94 each contribute to the Zn(2+) site. Lys-119 is a catalytic residue. Cys-163 acts as the Nucleophile in catalysis.

This sequence belongs to the isochorismatase family.

The protein localises to the cytoplasm. It localises to the nucleus. The protein resides in the peroxisome. It catalyses the reaction nicotinamide + H2O = nicotinate + NH4(+). It functions in the pathway cofactor biosynthesis; nicotinate biosynthesis; nicotinate from nicotinamide: step 1/1. Its function is as follows. Catalyzes the deamidation of nicotinamide, an early step in the NAD(+) salvage pathway. In Schizosaccharomyces pombe (strain 972 / ATCC 24843) (Fission yeast), this protein is Nicotinamidase (pnc1).